The following is a 195-amino-acid chain: Peptidyl-tRNA hydrolase (195 aa).

A tRNA-binding site is contributed by Y18. H23 acts as the Proton acceptor in catalysis. Residues Y69, N71, and N117 each contribute to the tRNA site.

It belongs to the PTH family. Monomer.

The protein resides in the cytoplasm. It catalyses the reaction an N-acyl-L-alpha-aminoacyl-tRNA + H2O = an N-acyl-L-amino acid + a tRNA + H(+). Hydrolyzes ribosome-free peptidyl-tRNAs (with 1 or more amino acids incorporated), which drop off the ribosome during protein synthesis, or as a result of ribosome stalling. Its function is as follows. Catalyzes the release of premature peptidyl moieties from peptidyl-tRNA molecules trapped in stalled 50S ribosomal subunits, and thus maintains levels of free tRNAs and 50S ribosomes. This Nitrosomonas eutropha (strain DSM 101675 / C91 / Nm57) protein is Peptidyl-tRNA hydrolase.